The following is a 292-amino-acid chain: 11-beta-hydroxysteroid dehydrogenase 1 (292 aa).

Residues 1–7 are Cytoplasmic-facing; sequence MAFMKKY. The helical; Signal-anchor for type II membrane protein transmembrane segment at 8–24 threads the bilayer; it reads LLPILGLFMAYYYYSAN. The Lumenal portion of the chain corresponds to 25-292; that stretch reads EEFRPEMLQG…SYNMDRFINK (268 aa). NADP(+)-binding positions include 41 to 67, 92 to 93, and 119 to 121; these read GASK…TARS, TM, and NHI. N-linked (GlcNAc...) asparagine glycans are attached at residues Asn-123 and Asn-162. Ser-170 is a binding site for substrate. The Proton acceptor role is filled by Tyr-183. NADP(+) is bound at residue 183-187; the sequence is YSASK. The N-linked (GlcNAc...) asparagine glycan is linked to Asn-207. 218-222 is a binding site for NADP(+); it reads IDTET.

It belongs to the short-chain dehydrogenases/reductases (SDR) family. As to quaternary structure, homodimer. In terms of processing, glycosylated. Widely expressed, highest expression in liver, lower in testis, ovary, lung, foreskin fibroblasts, and much lower in kidney. Expressed in liver (at protein level). Expressed in the basal cells of the corneal epithelium and in the ciliary nonpigmented epithelium (both at mRNA and at protein level).

Its subcellular location is the endoplasmic reticulum membrane. The enzyme catalyses an 11beta-hydroxysteroid + NADP(+) = an 11-oxosteroid + NADPH + H(+). It catalyses the reaction cortisone + NADPH + H(+) = cortisol + NADP(+). The catalysed reaction is corticosterone + NADP(+) = 11-dehydrocorticosterone + NADPH + H(+). It carries out the reaction a 7beta-hydroxysteroid + NADP(+) = a 7-oxosteroid + NADPH + H(+). The enzyme catalyses 7-oxocholesterol + NADPH + H(+) = 7beta-hydroxycholesterol + NADP(+). It catalyses the reaction chenodeoxycholate + NADP(+) = 7-oxolithocholate + NADPH + H(+). The catalysed reaction is 7-oxolithocholate + NADPH + H(+) = ursodeoxycholate + NADP(+). It carries out the reaction glycochenodeoxycholate + NADP(+) = 7-oxoglycolithocholate + NADPH + H(+). The enzyme catalyses taurochenodeoxycholate + NADP(+) = 7-oxotaurolithocholate + NADPH + H(+). It catalyses the reaction tauroursodeoxycholate + NADP(+) = 7-oxotaurolithocholate + NADPH + H(+). The catalysed reaction is glycoursodeoxycholate + NADP(+) = 7-oxoglycolithocholate + NADPH + H(+). It carries out the reaction 7-oxopregnenolone + NADPH + H(+) = 7beta-hydroxypregnenolone + NADP(+). The enzyme catalyses 3beta,7alpha-dihydroxyandrost-5-en-17-one + NADP(+) = 3beta-hydroxy-5-androstene-7,17-dione + NADPH + H(+). It catalyses the reaction 3beta-hydroxy-5-androstene-7,17-dione + NADPH + H(+) = 3beta,7beta-dihydroxyandrost-5-en-17-one + NADP(+). The catalysed reaction is 3beta-hydroxy-5alpha-androstane-7,17-dione + NADPH + H(+) = 3beta,7beta-dihydroxy-5alpha-androstan-17-one + NADP(+). The protein operates within steroid metabolism. Hexose-6-phosphate dehydrogenase (H6PD) provides cosubstrate NADPH, and the glucose-6-phosphate transporter in the ER-membrane supplies the substrate for H6PDH, their activities stimulate the reduction of cortisone and abolish the oxidation of cortisol. Functionally, controls the reversible conversion of biologically active glucocorticoids such as cortisone to cortisol, and 11-dehydrocorticosterone to corticosterone in the presence of NADP(H). Participates in the corticosteroid receptor-mediated anti-inflammatory response, as well as metabolic and homeostatic processes. Plays a role in the secretion of aqueous humor in the eye, maintaining a normotensive, intraocular environment. Bidirectional in vitro, predominantly functions as a reductase in vivo, thereby increasing the concentration of active glucocorticoids. It has broad substrate specificity, besides glucocorticoids, it accepts other steroid and sterol substrates. Interconverts 7-oxo- and 7-hydroxy-neurosteroids such as 7-oxopregnenolone and 7beta-hydroxypregnenolone, 7-oxodehydroepiandrosterone (3beta-hydroxy-5-androstene-7,17-dione) and 7beta-hydroxydehydroepiandrosterone (3beta,7beta-dihydroxyandrost-5-en-17-one), among others. Catalyzes the stereo-specific conversion of the major dietary oxysterol, 7-ketocholesterol (7-oxocholesterol), into the more polar 7-beta-hydroxycholesterol metabolite. 7-oxocholesterol is one of the most important oxysterols, it participates in several events such as induction of apoptosis, accumulation in atherosclerotic lesions, lipid peroxidation, and induction of foam cell formation. Mediates the 7-oxo reduction of 7-oxolithocholate mainly to chenodeoxycholate, and to a lesser extent to ursodeoxycholate, both in its free form and when conjugated to glycine or taurine, providing a link between glucocorticoid activation and bile acid metabolism. Catalyzes the synthesis of 7-beta-25-dihydroxycholesterol from 7-oxo-25-hydroxycholesterol in vitro, which acts as a ligand for the G-protein-coupled receptor (GPCR) Epstein-Barr virus-induced gene 2 (EBI2) and may thereby regulate immune cell migration. In Homo sapiens (Human), this protein is 11-beta-hydroxysteroid dehydrogenase 1.